A 513-amino-acid polypeptide reads, in one-letter code: Laccase (513 aa).

Plastocyanin-like domains follow at residues 45–81 (PTRL…STHF), 101–178 (KTVV…HDPK), 240–318 (WPYL…ILAN), and 378–509 (QDEY…MDIT). Residues histidine 105, histidine 107, histidine 153, and histidine 155 each contribute to the Cu cation site. Histidine 419, histidine 422, histidine 424, histidine 491, cysteine 492, histidine 493, histidine 497, and methionine 502 together coordinate Cu cation.

The protein belongs to the multicopper oxidase family. In terms of assembly, monomer. Cu(2+) serves as cofactor.

It localises to the spore coat. It catalyses the reaction 4 hydroquinone + O2 = 4 benzosemiquinone + 2 H2O. The catalysed reaction is 2 (4Z,15Z)-bilirubin IXalpha + O2 = 2 biliverdin IXalpha + 2 H2O. Inhibited by azide. Functionally, multicopper oxidase that catalyzes the oxidation of a variety of substrates, including phenolic and non-phenolic compounds. Substrates include syringaldazine (SGZ), 2,6-dimethoxyphenol (2,6-DMP) and the non-phenolic compound 2,2'-azino-bis(3-ethylbenzothiazoline-6-sulfonic acid) (ABTS). Has no tyrosinase activity. Is implicated in the biosynthesis of a brownish pigment that characterizes sporulating colonies of B.subtilis, and which appears to be a melanin-like product and to confer protection against UV light. In terms of biological role, in vitro, also shows strong bilirubin oxidase (BOD) activity, and can catalyze the oxidation of free bilirubin (UB), direct bilirubin (conjugated with glucuronic acid, DB) and ditaurobilirubin. This Bacillus subtilis (strain 168) protein is Laccase.